The sequence spans 336 residues: Opsin-1, short-wave-sensitive 1 (336 aa).

At 1-29 (MDAWAVQFGNASKVSPFEGEQYHIAPKWA) the chain is on the extracellular side. Asparagine 10 carries N-linked (GlcNAc...) asparagine glycosylation. A helical transmembrane segment spans residues 30 to 54 (FYLQAAFMGFVFIVGTPMNGIVLFV). At 55–66 (TMKYKKLRQPLN) the chain is on the cytoplasmic side. Residues 67 to 91 (YILVNISLAGFIFDTFSVSQVFVCA) traverse the membrane as a helical segment. The Extracellular segment spans residues 92–106 (ARGYYFLGYTLCAME). A disulfide bond links cysteine 103 and cysteine 180. The chain crosses the membrane as a helical span at residues 107 to 126 (AAMGSIAGLVTGWSLAVLAF). The Cytoplasmic portion of the chain corresponds to 127–145 (ERYVVICKPFGSFKFGQGQ). A helical transmembrane segment spans residues 146 to 169 (AVGAVVFTWIIGTACATPPFFGWS). The Extracellular portion of the chain corresponds to 170-195 (RYIPEGLGTACGPDWYTKSEEYNSES). A helical membrane pass occupies residues 196–223 (YTYFLLITCFMMPMTIIIFSYSQLLGAL). Topologically, residues 224 to 245 (RAVAAQQAESESTQKAEREVSR) are cytoplasmic. A helical membrane pass occupies residues 246-269 (MVVVMVGSFVLCYAPYAVTAMYFA). Residues 270 to 277 (NSDEPNKD) are Extracellular-facing. The chain crosses the membrane as a helical span at residues 278 to 302 (YRLVAIPAFFSKSSCVYNPLIYAFM). N6-(retinylidene)lysine is present on lysine 289. Over 303 to 336 (NKQFNACIMETVFGKKIDESSEVSSKTETSSVSA) the chain is Cytoplasmic.

Belongs to the G-protein coupled receptor 1 family. Opsin subfamily. Phosphorylated on some or all of the serine and threonine residues present in the C-terminal region. Retinal short single cones, outer and inner segments.

The protein resides in the membrane. Its function is as follows. Visual pigments are the light-absorbing molecules that mediate vision. They consist of an apoprotein, opsin, covalently linked to cis-retinal. The polypeptide is Opsin-1, short-wave-sensitive 1 (opn1sw1) (Danio rerio (Zebrafish)).